The primary structure comprises 271 residues: Fork head domain-containing protein FD5 (271 aa).

A DNA-binding region (fork-head) is located at residues 12-103 (QKPPYSYISL…FDMFENGSLL (92 aa)).

In terms of tissue distribution, expressed in early embryogenesis in 14 symmetrical pairs of segmentally arranged neuroblasts and in developing peripheral nervous system. Also, later in embryogenesis, in a cluster of cells in head region.

It localises to the nucleus. Its function is as follows. Involved in development during embryogenesis. This Drosophila melanogaster (Fruit fly) protein is Fork head domain-containing protein FD5 (fd96Cb).